A 259-amino-acid chain; its full sequence is Protein LEAD-SENSITIVE 1 (259 aa).

In terms of domain architecture, LRAT spans 20–168 (YSWRTAYIYA…CKTALLVLEG (149 aa)). Active-site residues include histidine 30 and histidine 42. The Acyl-thioester intermediate role is filled by cysteine 152.

As to expression, highly expressed in inflorescences, siliques and stems, and, to a lower extent, in roots and leaves.

Its subcellular location is the cytoplasm. Functionally, confers tolerance to lead ions (Pb) stress mediated by Pb(NO(3))(2) probably by promoting Pb accumulation leading to subsequent glutathione-dependent phytochelatin (PC) synthesis and related gene expression, including PDR12/ABCG40, GSH1, GSH2, GR1, GR2, PCS1 and PCS2. This chain is Protein LEAD-SENSITIVE 1, found in Arabidopsis thaliana (Mouse-ear cress).